The sequence spans 114 residues: Abscisic stress-ripening protein 2 (114 aa).

Disordered stretches follow at residues 1-25 (MAEE…GGPV) and 88-114 (FHEH…HHHY). Over residues 7–16 (QHHHHLFHHK) the composition is skewed to basic residues. Residues 97–107 (AKKEKKEVEGG) are compositionally biased toward basic and acidic residues.

The protein belongs to the abscisic acid and water stress-induced protein family.

The sequence is that of Abscisic stress-ripening protein 2 from Solanum lycopersicum (Tomato).